Reading from the N-terminus, the 87-residue chain is Acyl carrier protein TtuC (87 aa).

The Carrier domain occupies 11–87 (ITAEDVQQWL…HALSQFIAAK (77 aa)). S48 is modified (O-(pantetheine 4'-phosphoryl)serine).

Pantetheine 4'-phosphate is required as a cofactor.

Carrier protein likely involved in the biosynthesis of a polyyne metabolite. Accepts as substrate the activated form of decanoic acid from TtuA. The polypeptide is Acyl carrier protein TtuC (Teredinibacter turnerae (strain ATCC 39867 / T7901)).